The following is a 451-amino-acid chain: Bifunctional protein GlmU (451 aa).

The segment at 1-229 is pyrophosphorylase; the sequence is MQRNAVILAA…FNEIMGVNDR (229 aa). Residues 8–11, lysine 22, glutamine 72, and 77–78 contribute to the UDP-N-acetyl-alpha-D-glucosamine site; these read LAAG and GT. Aspartate 102 is a Mg(2+) binding site. The UDP-N-acetyl-alpha-D-glucosamine site is built by glycine 139, glutamate 154, and asparagine 227. Asparagine 227 contacts Mg(2+). The interval 230–250 is linker; sequence VMLSNAEKALQQRINIEHMRN. An N-acetyltransferase region spans residues 251–451; sequence GVTIIDPTTT…QITKEGYLKK (201 aa). Residues arginine 332 and lysine 350 each contribute to the UDP-N-acetyl-alpha-D-glucosamine site. Histidine 362 serves as the catalytic Proton acceptor. UDP-N-acetyl-alpha-D-glucosamine contacts are provided by tyrosine 365 and asparagine 376. Acetyl-CoA is bound by residues 385–386, alanine 422, and arginine 439; that span reads NY.

In the N-terminal section; belongs to the N-acetylglucosamine-1-phosphate uridyltransferase family. The protein in the C-terminal section; belongs to the transferase hexapeptide repeat family. Homotrimer. Mg(2+) serves as cofactor.

It is found in the cytoplasm. The catalysed reaction is alpha-D-glucosamine 1-phosphate + acetyl-CoA = N-acetyl-alpha-D-glucosamine 1-phosphate + CoA + H(+). It carries out the reaction N-acetyl-alpha-D-glucosamine 1-phosphate + UTP + H(+) = UDP-N-acetyl-alpha-D-glucosamine + diphosphate. It participates in nucleotide-sugar biosynthesis; UDP-N-acetyl-alpha-D-glucosamine biosynthesis; N-acetyl-alpha-D-glucosamine 1-phosphate from alpha-D-glucosamine 6-phosphate (route II): step 2/2. The protein operates within nucleotide-sugar biosynthesis; UDP-N-acetyl-alpha-D-glucosamine biosynthesis; UDP-N-acetyl-alpha-D-glucosamine from N-acetyl-alpha-D-glucosamine 1-phosphate: step 1/1. Its pathway is bacterial outer membrane biogenesis; LPS lipid A biosynthesis. In terms of biological role, catalyzes the last two sequential reactions in the de novo biosynthetic pathway for UDP-N-acetylglucosamine (UDP-GlcNAc). The C-terminal domain catalyzes the transfer of acetyl group from acetyl coenzyme A to glucosamine-1-phosphate (GlcN-1-P) to produce N-acetylglucosamine-1-phosphate (GlcNAc-1-P), which is converted into UDP-GlcNAc by the transfer of uridine 5-monophosphate (from uridine 5-triphosphate), a reaction catalyzed by the N-terminal domain. This chain is Bifunctional protein GlmU, found in Staphylococcus haemolyticus (strain JCSC1435).